The sequence spans 346 residues: Histidinol-phosphate aminotransferase (346 aa).

K209 is modified (N6-(pyridoxal phosphate)lysine).

The protein belongs to the class-II pyridoxal-phosphate-dependent aminotransferase family. Histidinol-phosphate aminotransferase subfamily. As to quaternary structure, homodimer. Pyridoxal 5'-phosphate is required as a cofactor.

It carries out the reaction L-histidinol phosphate + 2-oxoglutarate = 3-(imidazol-4-yl)-2-oxopropyl phosphate + L-glutamate. The protein operates within amino-acid biosynthesis; L-histidine biosynthesis; L-histidine from 5-phospho-alpha-D-ribose 1-diphosphate: step 7/9. The chain is Histidinol-phosphate aminotransferase from Vibrio campbellii (strain ATCC BAA-1116).